Consider the following 156-residue polypeptide: Ribosomal RNA large subunit methyltransferase H (156 aa).

Residues L73, G104, and 123–128 contribute to the S-adenosyl-L-methionine site; that span reads LSPLTL.

This sequence belongs to the RNA methyltransferase RlmH family. In terms of assembly, homodimer.

The protein resides in the cytoplasm. The enzyme catalyses pseudouridine(1915) in 23S rRNA + S-adenosyl-L-methionine = N(3)-methylpseudouridine(1915) in 23S rRNA + S-adenosyl-L-homocysteine + H(+). Specifically methylates the pseudouridine at position 1915 (m3Psi1915) in 23S rRNA. In Pectobacterium atrosepticum (strain SCRI 1043 / ATCC BAA-672) (Erwinia carotovora subsp. atroseptica), this protein is Ribosomal RNA large subunit methyltransferase H.